The primary structure comprises 82 residues: Cytochrome b559 subunit alpha (82 aa).

The helical transmembrane segment at 21-35 threads the bilayer; sequence VIHSITIPSLFIAGW. Residue His23 coordinates heme.

Belongs to the PsbE/PsbF family. In terms of assembly, heterodimer of an alpha subunit and a beta subunit. PSII is composed of 1 copy each of membrane proteins PsbA, PsbB, PsbC, PsbD, PsbE, PsbF, PsbH, PsbI, PsbJ, PsbK, PsbL, PsbM, PsbT, PsbX, PsbY, PsbZ, Psb30/Ycf12, at least 3 peripheral proteins of the oxygen-evolving complex and a large number of cofactors. It forms dimeric complexes. Requires heme b as cofactor.

The protein resides in the plastid. The protein localises to the chloroplast thylakoid membrane. This b-type cytochrome is tightly associated with the reaction center of photosystem II (PSII). PSII is a light-driven water:plastoquinone oxidoreductase that uses light energy to abstract electrons from H(2)O, generating O(2) and a proton gradient subsequently used for ATP formation. It consists of a core antenna complex that captures photons, and an electron transfer chain that converts photonic excitation into a charge separation. The protein is Cytochrome b559 subunit alpha of Stigeoclonium helveticum (Green alga).